Reading from the N-terminus, the 373-residue chain is Anhydro-N-acetylmuramic acid kinase (373 aa).

13 to 20 (GTSMDGID) lines the ATP pocket.

It belongs to the anhydro-N-acetylmuramic acid kinase family.

It carries out the reaction 1,6-anhydro-N-acetyl-beta-muramate + ATP + H2O = N-acetyl-D-muramate 6-phosphate + ADP + H(+). The protein operates within amino-sugar metabolism; 1,6-anhydro-N-acetylmuramate degradation. Its pathway is cell wall biogenesis; peptidoglycan recycling. Its function is as follows. Catalyzes the specific phosphorylation of 1,6-anhydro-N-acetylmuramic acid (anhMurNAc) with the simultaneous cleavage of the 1,6-anhydro ring, generating MurNAc-6-P. Is required for the utilization of anhMurNAc either imported from the medium or derived from its own cell wall murein, and thus plays a role in cell wall recycling. The sequence is that of Anhydro-N-acetylmuramic acid kinase from Brucella abortus (strain 2308).